The sequence spans 261 residues: DNA repair protein RecO (261 aa).

Belongs to the RecO family.

In terms of biological role, involved in DNA repair and RecF pathway recombination. The polypeptide is DNA repair protein RecO (Mycobacteroides abscessus (strain ATCC 19977 / DSM 44196 / CCUG 20993 / CIP 104536 / JCM 13569 / NCTC 13031 / TMC 1543 / L948) (Mycobacterium abscessus)).